Reading from the N-terminus, the 236-residue chain is UPF0257 lipoprotein YnfC (236 aa).

Residues 1–16 form the signal peptide; that stretch reads MKKPLLLTLLCMILAG. The N-palmitoyl cysteine moiety is linked to residue C17. C17 carries S-diacylglycerol cysteine lipidation.

The protein belongs to the UPF0257 family.

Its subcellular location is the cell membrane. This chain is UPF0257 lipoprotein YnfC, found in Salmonella typhi.